The primary structure comprises 206 residues: Protein GrpE (206 aa).

Residues Met1–Ala15 are compositionally biased toward polar residues. The tract at residues Met1–Glu38 is disordered.

Belongs to the GrpE family. Homodimer.

Its subcellular location is the cytoplasm. Its function is as follows. Participates actively in the response to hyperosmotic and heat shock by preventing the aggregation of stress-denatured proteins, in association with DnaK and GrpE. It is the nucleotide exchange factor for DnaK and may function as a thermosensor. Unfolded proteins bind initially to DnaJ; upon interaction with the DnaJ-bound protein, DnaK hydrolyzes its bound ATP, resulting in the formation of a stable complex. GrpE releases ADP from DnaK; ATP binding to DnaK triggers the release of the substrate protein, thus completing the reaction cycle. Several rounds of ATP-dependent interactions between DnaJ, DnaK and GrpE are required for fully efficient folding. This Rhodopseudomonas palustris (strain BisB5) protein is Protein GrpE.